The chain runs to 363 residues: Dihydroorotate dehydrogenase (quinone) (363 aa).

FMN contacts are provided by residues 70-74 (AGFDK) and threonine 94. Lysine 74 is a binding site for substrate. Position 119–123 (119–123 (NRMGF)) interacts with substrate. FMN contacts are provided by asparagine 147 and asparagine 180. Asparagine 180 is a substrate binding site. Catalysis depends on serine 183, which acts as the Nucleophile. Asparagine 185 contributes to the substrate binding site. Lysine 216 and threonine 244 together coordinate FMN. 245-246 (NT) contacts substrate. Residues glycine 270, glycine 299, and 320 to 321 (YT) each bind FMN.

This sequence belongs to the dihydroorotate dehydrogenase family. Type 2 subfamily. As to quaternary structure, monomer. FMN serves as cofactor.

The protein localises to the cell membrane. The catalysed reaction is (S)-dihydroorotate + a quinone = orotate + a quinol. It participates in pyrimidine metabolism; UMP biosynthesis via de novo pathway; orotate from (S)-dihydroorotate (quinone route): step 1/1. In terms of biological role, catalyzes the conversion of dihydroorotate to orotate with quinone as electron acceptor. This Corynebacterium diphtheriae (strain ATCC 700971 / NCTC 13129 / Biotype gravis) protein is Dihydroorotate dehydrogenase (quinone).